Reading from the N-terminus, the 494-residue chain is ATP synthase subunit alpha, chloroplastic (494 aa).

Gly-170–Thr-177 is an ATP binding site.

It belongs to the ATPase alpha/beta chains family. As to quaternary structure, F-type ATPases have 2 components, CF(1) - the catalytic core - and CF(0) - the membrane proton channel. CF(1) has five subunits: alpha(3), beta(3), gamma(1), delta(1), epsilon(1). CF(0) has four main subunits: a, b, b' and c.

The protein localises to the plastid. Its subcellular location is the chloroplast thylakoid membrane. The catalysed reaction is ATP + H2O + 4 H(+)(in) = ADP + phosphate + 5 H(+)(out). In terms of biological role, produces ATP from ADP in the presence of a proton gradient across the membrane. The alpha chain is a regulatory subunit. The polypeptide is ATP synthase subunit alpha, chloroplastic (Pinus thunbergii (Japanese black pine)).